A 283-amino-acid polypeptide reads, in one-letter code: Phosphatidylserine decarboxylase proenzyme (283 aa).

Catalysis depends on charge relay system; for autoendoproteolytic cleavage activity residues Asp96, His152, and Ser250. The active-site Schiff-base intermediate with substrate; via pyruvic acid; for decarboxylase activity is Ser250. At Ser250 the chain carries Pyruvic acid (Ser); by autocatalysis.

It belongs to the phosphatidylserine decarboxylase family. PSD-B subfamily. Prokaryotic type I sub-subfamily. In terms of assembly, heterodimer of a large membrane-associated beta subunit and a small pyruvoyl-containing alpha subunit. It depends on pyruvate as a cofactor. Is synthesized initially as an inactive proenzyme. Formation of the active enzyme involves a self-maturation process in which the active site pyruvoyl group is generated from an internal serine residue via an autocatalytic post-translational modification. Two non-identical subunits are generated from the proenzyme in this reaction, and the pyruvate is formed at the N-terminus of the alpha chain, which is derived from the carboxyl end of the proenzyme. The autoendoproteolytic cleavage occurs by a canonical serine protease mechanism, in which the side chain hydroxyl group of the serine supplies its oxygen atom to form the C-terminus of the beta chain, while the remainder of the serine residue undergoes an oxidative deamination to produce ammonia and the pyruvoyl prosthetic group on the alpha chain. During this reaction, the Ser that is part of the protease active site of the proenzyme becomes the pyruvoyl prosthetic group, which constitutes an essential element of the active site of the mature decarboxylase.

The protein localises to the cell membrane. It carries out the reaction a 1,2-diacyl-sn-glycero-3-phospho-L-serine + H(+) = a 1,2-diacyl-sn-glycero-3-phosphoethanolamine + CO2. Its pathway is phospholipid metabolism; phosphatidylethanolamine biosynthesis; phosphatidylethanolamine from CDP-diacylglycerol: step 2/2. In terms of biological role, catalyzes the formation of phosphatidylethanolamine (PtdEtn) from phosphatidylserine (PtdSer). This chain is Phosphatidylserine decarboxylase proenzyme, found in Acinetobacter baumannii (strain SDF).